The sequence spans 218 residues: Ras-related protein Rab-4A (218 aa).

Positions 23, 24, 25, 26, 27, and 28 each coordinate GDP. The GTP site is built by Gly23, Thr24, Gly25, Lys26, Ser27, Cys28, Ser42, His44, and Thr45. Ser27 provides a ligand contact to Mg(2+). The short motif at 44–49 (HTIGVE) is the Switch 1 element. 2 residues coordinate Mg(2+): Thr45 and Asp68. Residues 70 to 79 (AGQERFRSVT) carry the Switch 2 motif. Gly71 is a binding site for GTP. The residue at position 72 (Gln72) is a 5-glutamyl serotonin. GDP-binding residues include Asn126, Lys127, Asp129, Ala157, and Leu158. Positions 126, 127, 129, 157, and 158 each coordinate GTP. Ser190 is modified (phosphoserine). Phosphoserine; by CDK1 is present on Ser204. 2 S-geranylgeranyl cysteine lipidation sites follow: Cys216 and Cys218. Cys218 is subject to Cysteine methyl ester.

Belongs to the small GTPase superfamily. Rab family. Interacts with SGSM1, SGSM2 and SGSM3. Interacts with RAB11FIP1, RABEP1, ZFYVE20 and RUFY1. Interacts (membrane-bound form) with NDRG1; the interaction involves NDRG1 in vesicular recycling of E-cadherin. Interacts (in GTP-bound form) with GRIPAP1 (via N-terminus). Interacts with RABEP1 and RBSN. Does not interact with HPS4. Interacts with RABEP2; this interaction may mediate VEGFR2 cell surface expression. Mg(2+) is required as a cofactor. In terms of processing, phosphorylated by CDK1 kinase during mitosis. Serotonylation of Gln-72 by TGM2 during activation and aggregation of platelets leads to constitutive activation of GTPase activity.

The protein localises to the membrane. Its subcellular location is the cytoplasm. The protein resides in the early endosome membrane. It is found in the recycling endosome membrane. The catalysed reaction is GTP + H2O = GDP + phosphate + H(+). With respect to regulation, regulated by guanine nucleotide exchange factors (GEFs) which promote the exchange of bound GDP for free GTP. Regulated by GTPase activating proteins (GAPs) which increase the GTP hydrolysis activity. Inhibited by GDP dissociation inhibitors (GDIs). Its function is as follows. The small GTPases Rab are key regulators of intracellular membrane trafficking, from the formation of transport vesicles to their fusion with membranes. Rabs cycle between an inactive GDP-bound form and an active GTP-bound form that is able to recruit to membranes different sets of downstream effectors directly responsible for vesicle formation, movement, tethering and fusion. RAB4A is involved in protein transport. Also plays a role in vesicular traffic. Mediates VEGFR2 endosomal trafficking to enhance VEGFR2 signaling. Acts as a regulator of platelet alpha-granule release during activation and aggregation of platelets. In Homo sapiens (Human), this protein is Ras-related protein Rab-4A.